Here is a 321-residue protein sequence, read N- to C-terminus: uncharacterized protein (321 aa).

The next 10 membrane-spanning stretches (helical) occupy residues 6-26 (LFIG…MFPV), 37-57 (FYFS…LLLV), 72-92 (WIIL…FLGQ), 100-120 (IMTA…ILWG), 134-154 (ILIA…SFFF), 160-180 (LFSI…TMGG), 196-216 (CLFG…QGYV), 223-243 (VIAA…IIAL), 255-275 (SING…IMVI), and 277-297 (GYNI…GLIL). EamA domains follow at residues 18–146 (MSWG…MVIT) and 175–300 (VYTM…LNNI).

This sequence belongs to the EamA transporter family.

The protein resides in the cell membrane. This is an uncharacterized protein from Bacillus subtilis (strain 168).